A 76-amino-acid chain; its full sequence is uncharacterized protein (76 aa).

The tract at residues 1-24 (MPLRLCQGRKDRASDPVRDDGSPP) is disordered. A compositionally biased stretch (basic and acidic residues) spans 8–22 (GRKDRASDPVRDDGS).

This is an uncharacterized protein from Dryophytes versicolor (chameleon treefrog).